The sequence spans 458 residues: Adenylosuccinate synthetase (458 aa).

GTP-binding positions include 17–23 (GDEGKGK) and 45–47 (GHT). The Proton acceptor role is filled by aspartate 18. Mg(2+) is bound by residues aspartate 18 and glycine 45. IMP is bound by residues 18 to 21 (DEGK), 43 to 46 (NAGH), threonine 137, arginine 151, glutamine 247, threonine 262, and arginine 330. The active-site Proton donor is the histidine 46. 326–332 (VTTGRSR) contributes to the substrate binding site. GTP-binding positions include arginine 332, 358-360 (KLD), and 440-442 (STS).

It belongs to the adenylosuccinate synthetase family. As to quaternary structure, homodimer. Requires Mg(2+) as cofactor.

The protein localises to the cytoplasm. It carries out the reaction IMP + L-aspartate + GTP = N(6)-(1,2-dicarboxyethyl)-AMP + GDP + phosphate + 2 H(+). It participates in purine metabolism; AMP biosynthesis via de novo pathway; AMP from IMP: step 1/2. Plays an important role in the de novo pathway of purine nucleotide biosynthesis. Catalyzes the first committed step in the biosynthesis of AMP from IMP. The protein is Adenylosuccinate synthetase of Verminephrobacter eiseniae (strain EF01-2).